The primary structure comprises 1024 residues: Probable serine/threonine-protein kinase DDB_G0271682 (1024 aa).

The interval 187–261 (NIDNNNNNNN…RDNENNHNHQ (75 aa)) is disordered. The segment covering 190-244 (NNNNNNNNNNNNNNNNNNNNNNNNNNNNNNNNNNNNNNNNNNNNNNNNNNNNNNN) has biased composition (low complexity). Basic and acidic residues predominate over residues 250 to 261 (RSRDNENNHNHQ). 2 consecutive Protein kinase domains span residues 360–609 (LLFI…LKLM) and 645–1018 (ILVT…ELLI). ATP-binding positions include 366–374 (IGSGACGEV) and K387. D484 (proton acceptor) is an active-site residue. ATP-binding positions include 651-659 (VGGNVSGNV) and K719. 2 stretches are compositionally biased toward low complexity: residues 823–851 (NNNSNQNNNNNNNNNNNNNNNNNNNNNNN) and 862–874 (ENTNTTTTTTTTT). The tract at residues 823-874 (NNNSNQNNNNNNNNNNNNNNNNNNNNNNNKKNDGGDDNGENTNTTTTTTTTT) is disordered.

The protein belongs to the protein kinase superfamily. TKL Ser/Thr protein kinase family.

The enzyme catalyses L-seryl-[protein] + ATP = O-phospho-L-seryl-[protein] + ADP + H(+). It catalyses the reaction L-threonyl-[protein] + ATP = O-phospho-L-threonyl-[protein] + ADP + H(+). The protein is Probable serine/threonine-protein kinase DDB_G0271682 of Dictyostelium discoideum (Social amoeba).